Reading from the N-terminus, the 474-residue chain is MTTFKEAVTFKDVAVFFTEEELGLLDPAQRKLYQDVMLENFTNLLSVGHQPFHPFHFLREEKFWMMETATQREGNSGGKTIAEAGPHEDCPCQQIWEQTASDLTQSQDSIINNSHFFEQGDVPSQVEAGLSIIHTGQKPSQNGKCKQSFSDVAIFDPPQQFHSGEKSHTCNECGKSFCYISALRIHQRVHLREKLSKCDMRGKEFSQSSCLQTRERVHTGEKPFKCEQCGKGFRCRAILQVHCKLHTGEKPYICEKCGRAFIHDFQLQKHQIIHTGEKPFKCEICGKSFCLRSSLNRHCMVHTAEKLYKSEECGKGFTDSLDLHKHQIIHTGQKPYNCKECGKSFRWSSYLLIHQRIHSGEKPYRCEECGKGYISKSGLNLHQRVHTGERPYNCKECGKSFSRASSILNHKKLHCRKKPFKCEDCGKRLVHRSFCKDQQGDHNGENSSKCEDCGKRYKRRLNLDIILSLFLNDM.

One can recognise a KRAB domain in the interval 8–76 (VTFKDVAVFF…ETATQREGNS (69 aa)). Residues 80 to 167 (TIAEAGPHED…PQQFHSGEKS (88 aa)) are KRNB. C2H2-type zinc fingers lie at residues 168 to 190 (HTCNECGKSFCYISALRIHQRVH), 196 to 218 (SKCDMRGKEFSQSSCLQTRERVH), 224 to 246 (FKCEQCGKGFRCRAILQVHCKLH), 252 to 274 (YICEKCGRAFIHDFQLQKHQIIH), 280 to 302 (FKCEICGKSFCLRSSLNRHCMVH), 308 to 330 (YKSEECGKGFTDSLDLHKHQIIH), 336 to 358 (YNCKECGKSFRWSSYLLIHQRIH), 364 to 386 (YRCEECGKGYISKSGLNLHQRVH), and 392 to 414 (YNCKECGKSFSRASSILNHKKLH). The C2H2-type 10; atypical zinc finger occupies 420-442 (FKCEDCGKRLVHRSFCKDQQGDH).

This sequence belongs to the krueppel C2H2-type zinc-finger protein family.

It localises to the nucleus. In terms of biological role, may be involved in transcriptional regulation. This Homo sapiens (Human) protein is Zinc finger protein 230 (ZNF230).